The primary structure comprises 345 residues: Biotin synthase (345 aa).

A Radical SAM core domain is found at 66 to 293 (NTVQLSTLLS…RAMVRLSAGR (228 aa)). Residues Cys-81, Cys-85, and Cys-88 each contribute to the [4Fe-4S] cluster site. [2Fe-2S] cluster is bound by residues Cys-125, Cys-156, Cys-216, and Arg-288.

The protein belongs to the radical SAM superfamily. Biotin synthase family. As to quaternary structure, homodimer. Requires [4Fe-4S] cluster as cofactor. [2Fe-2S] cluster serves as cofactor.

The catalysed reaction is (4R,5S)-dethiobiotin + (sulfur carrier)-SH + 2 reduced [2Fe-2S]-[ferredoxin] + 2 S-adenosyl-L-methionine = (sulfur carrier)-H + biotin + 2 5'-deoxyadenosine + 2 L-methionine + 2 oxidized [2Fe-2S]-[ferredoxin]. It functions in the pathway cofactor biosynthesis; biotin biosynthesis; biotin from 7,8-diaminononanoate: step 2/2. Catalyzes the conversion of dethiobiotin (DTB) to biotin by the insertion of a sulfur atom into dethiobiotin via a radical-based mechanism. This Cupriavidus metallidurans (strain ATCC 43123 / DSM 2839 / NBRC 102507 / CH34) (Ralstonia metallidurans) protein is Biotin synthase.